A 232-amino-acid polypeptide reads, in one-letter code: Purine nucleoside phosphorylase DeoD-type (232 aa).

A purine D-ribonucleoside is bound at residue His-4. Residues Gly-20, Arg-24, Arg-43, and 87–90 (RIGT) contribute to the phosphate site. A purine D-ribonucleoside is bound by residues 179 to 181 (EME) and 203 to 204 (SD). Asp-204 serves as the catalytic Proton donor.

This sequence belongs to the PNP/UDP phosphorylase family. As to quaternary structure, homohexamer; trimer of homodimers.

The enzyme catalyses a purine D-ribonucleoside + phosphate = a purine nucleobase + alpha-D-ribose 1-phosphate. The catalysed reaction is a purine 2'-deoxy-D-ribonucleoside + phosphate = a purine nucleobase + 2-deoxy-alpha-D-ribose 1-phosphate. Its function is as follows. Catalyzes the reversible phosphorolytic breakdown of the N-glycosidic bond in the beta-(deoxy)ribonucleoside molecules, with the formation of the corresponding free purine bases and pentose-1-phosphate. This chain is Purine nucleoside phosphorylase DeoD-type, found in Caldanaerobacter subterraneus subsp. tengcongensis (strain DSM 15242 / JCM 11007 / NBRC 100824 / MB4) (Thermoanaerobacter tengcongensis).